We begin with the raw amino-acid sequence, 145 residues long: Actin-depolymerizing factor 2 (145 aa).

One can recognise an ADF-H domain in the interval 13-145 (GMGVAPDIRD…DLEVLRERAH (133 aa)).

It belongs to the actin-binding proteins ADF family.

Functionally, actin-depolymerizing protein. Severs actin filaments (F-actin) and binds to actin monomers. This chain is Actin-depolymerizing factor 2 (ADF2), found in Oryza sativa subsp. japonica (Rice).